The chain runs to 86 residues: UPF0297 protein SAHV_1604 (86 aa).

This sequence belongs to the UPF0297 family.

This is UPF0297 protein SAHV_1604 from Staphylococcus aureus (strain Mu3 / ATCC 700698).